We begin with the raw amino-acid sequence, 267 residues long: Formamidopyrimidine-DNA glycosylase (267 aa).

Pro2 serves as the catalytic Schiff-base intermediate with DNA. The active-site Proton donor is the Glu3. Lys53 serves as the catalytic Proton donor; for beta-elimination activity. The DNA site is built by His82 and Arg100. The segment at 230–264 (AVYGREGLPCPACGRPVERRVVAGRGTHFCPTCQG) adopts an FPG-type zinc-finger fold. Arg254 serves as the catalytic Proton donor; for delta-elimination activity.

Belongs to the FPG family. Monomer. It depends on Zn(2+) as a cofactor.

The enzyme catalyses Hydrolysis of DNA containing ring-opened 7-methylguanine residues, releasing 2,6-diamino-4-hydroxy-5-(N-methyl)formamidopyrimidine.. It carries out the reaction 2'-deoxyribonucleotide-(2'-deoxyribose 5'-phosphate)-2'-deoxyribonucleotide-DNA = a 3'-end 2'-deoxyribonucleotide-(2,3-dehydro-2,3-deoxyribose 5'-phosphate)-DNA + a 5'-end 5'-phospho-2'-deoxyribonucleoside-DNA + H(+). Involved in base excision repair of DNA damaged by oxidation or by mutagenic agents. Acts as a DNA glycosylase that recognizes and removes damaged bases. Has a preference for oxidized purines, such as 7,8-dihydro-8-oxoguanine (8-oxoG). Has AP (apurinic/apyrimidinic) lyase activity and introduces nicks in the DNA strand. Cleaves the DNA backbone by beta-delta elimination to generate a single-strand break at the site of the removed base with both 3'- and 5'-phosphates. This Thermus thermophilus (strain ATCC BAA-163 / DSM 7039 / HB27) protein is Formamidopyrimidine-DNA glycosylase.